The chain runs to 493 residues: Ketol-acid reductoisomerase (NADP(+)) (493 aa).

The KARI N-terminal Rossmann domain occupies 14-208; it reads LDQLGRCRFM…GGDRAGVLES (195 aa). NADP(+) is bound by residues 45-48, Arg-68, Arg-76, Ser-78, and 108-110; these read CGAQ and DKQ. The active site involves His-132. Gly-158 provides a ligand contact to NADP(+). KARI C-terminal knotted domains are found at residues 209–345 and 346–486; these read SFVA…APKA and DGIK…MTDM. The Mg(2+) site is built by Asp-217, Glu-221, Glu-390, and Glu-394. Ser-415 is a binding site for substrate.

The protein belongs to the ketol-acid reductoisomerase family. Mg(2+) is required as a cofactor.

It carries out the reaction (2R)-2,3-dihydroxy-3-methylbutanoate + NADP(+) = (2S)-2-acetolactate + NADPH + H(+). It catalyses the reaction (2R,3R)-2,3-dihydroxy-3-methylpentanoate + NADP(+) = (S)-2-ethyl-2-hydroxy-3-oxobutanoate + NADPH + H(+). Its pathway is amino-acid biosynthesis; L-isoleucine biosynthesis; L-isoleucine from 2-oxobutanoate: step 2/4. It functions in the pathway amino-acid biosynthesis; L-valine biosynthesis; L-valine from pyruvate: step 2/4. Functionally, involved in the biosynthesis of branched-chain amino acids (BCAA). Catalyzes an alkyl-migration followed by a ketol-acid reduction of (S)-2-acetolactate (S2AL) to yield (R)-2,3-dihydroxy-isovalerate. In the isomerase reaction, S2AL is rearranged via a Mg-dependent methyl migration to produce 3-hydroxy-3-methyl-2-ketobutyrate (HMKB). In the reductase reaction, this 2-ketoacid undergoes a metal-dependent reduction by NADPH to yield (R)-2,3-dihydroxy-isovalerate. In Actinobacillus succinogenes (strain ATCC 55618 / DSM 22257 / CCUG 43843 / 130Z), this protein is Ketol-acid reductoisomerase (NADP(+)).